A 201-amino-acid polypeptide reads, in one-letter code: Holliday junction resolvase RecU (201 aa).

The Mg(2+) site is built by Thr85, Asp87, Asp100, and Gln119.

It belongs to the RecU family. The cofactor is Mg(2+).

Its subcellular location is the cytoplasm. It catalyses the reaction Endonucleolytic cleavage at a junction such as a reciprocal single-stranded crossover between two homologous DNA duplexes (Holliday junction).. In terms of biological role, endonuclease that resolves Holliday junction intermediates in genetic recombination. Cleaves mobile four-strand junctions by introducing symmetrical nicks in paired strands. Promotes annealing of linear ssDNA with homologous dsDNA. Required for DNA repair, homologous recombination and chromosome segregation. This chain is Holliday junction resolvase RecU, found in Pediococcus pentosaceus (strain ATCC 25745 / CCUG 21536 / LMG 10740 / 183-1w).